Here is a 241-residue protein sequence, read N- to C-terminus: 4-hydroxy-tetrahydrodipicolinate reductase (241 aa).

Residues 7–12 (GVNGHM), 74–76 (GTT), and 98–101 (STNM) contribute to the NAD(+) site. H131 acts as the Proton donor/acceptor in catalysis. H132 serves as a coordination point for (S)-2,3,4,5-tetrahydrodipicolinate. K135 serves as the catalytic Proton donor. 141–142 (GS) provides a ligand contact to (S)-2,3,4,5-tetrahydrodipicolinate.

This sequence belongs to the DapB family.

The protein localises to the cytoplasm. The catalysed reaction is (S)-2,3,4,5-tetrahydrodipicolinate + NAD(+) + H2O = (2S,4S)-4-hydroxy-2,3,4,5-tetrahydrodipicolinate + NADH + H(+). It carries out the reaction (S)-2,3,4,5-tetrahydrodipicolinate + NADP(+) + H2O = (2S,4S)-4-hydroxy-2,3,4,5-tetrahydrodipicolinate + NADPH + H(+). Its pathway is amino-acid biosynthesis; L-lysine biosynthesis via DAP pathway; (S)-tetrahydrodipicolinate from L-aspartate: step 4/4. Its function is as follows. Catalyzes the conversion of 4-hydroxy-tetrahydrodipicolinate (HTPA) to tetrahydrodipicolinate. In Alkaliphilus oremlandii (strain OhILAs) (Clostridium oremlandii (strain OhILAs)), this protein is 4-hydroxy-tetrahydrodipicolinate reductase.